The chain runs to 365 residues: Phospho-N-acetylmuramoyl-pentapeptide-transferase (365 aa).

10 helical membrane passes run 22–42 (YISVRIIMISITSLLITLALG), 74–94 (TMGGVLILSSVIISCLLWGDL), 95–115 (TSIYLWILILVVIFFGAIGFF), 133–153 (YKFALQSIFSIVLAIVLFYLL), 168–188 (SLYIPMGIVIFVVLAFFIING), 201–221 (GLAIVPVVLVAAGLGIYAYIE), 240–260 (LAEVAVFCAAVCGSGLAFLWF), 267–287 (VFMGDVGSLTLGAVLGVIAVM), 292–312 (LIFFIMGLLFVVEALSVMLQV), and 342–362 (KVVIRFWIISLILFLIGLAAI).

The protein belongs to the glycosyltransferase 4 family. MraY subfamily. The cofactor is Mg(2+).

It is found in the cell inner membrane. The catalysed reaction is UDP-N-acetyl-alpha-D-muramoyl-L-alanyl-gamma-D-glutamyl-meso-2,6-diaminopimeloyl-D-alanyl-D-alanine + di-trans,octa-cis-undecaprenyl phosphate = di-trans,octa-cis-undecaprenyl diphospho-N-acetyl-alpha-D-muramoyl-L-alanyl-D-glutamyl-meso-2,6-diaminopimeloyl-D-alanyl-D-alanine + UMP. Its pathway is cell wall biogenesis; peptidoglycan biosynthesis. Its function is as follows. Catalyzes the initial step of the lipid cycle reactions in the biosynthesis of the cell wall peptidoglycan: transfers peptidoglycan precursor phospho-MurNAc-pentapeptide from UDP-MurNAc-pentapeptide onto the lipid carrier undecaprenyl phosphate, yielding undecaprenyl-pyrophosphoryl-MurNAc-pentapeptide, known as lipid I. The sequence is that of Phospho-N-acetylmuramoyl-pentapeptide-transferase from Francisella tularensis subsp. tularensis (strain WY96-3418).